The following is a 231-amino-acid chain: uncharacterized protein (231 aa).

10–34 is an NADP(+) binding site; the sequence is VVTGAGSGIGEAIATLLHEEGAKVV. S140 is a binding site for substrate. Catalysis depends on Y153, which acts as the Proton acceptor.

Belongs to the short-chain dehydrogenases/reductases (SDR) family.

This is an uncharacterized protein from Staphylococcus aureus (strain N315).